The following is a 426-amino-acid chain: Enolase (426 aa).

(2R)-2-phosphoglycerate is bound at residue glutamine 163. Catalysis depends on glutamate 205, which acts as the Proton donor. Residues aspartate 242, glutamate 286, and aspartate 313 each contribute to the Mg(2+) site. (2R)-2-phosphoglycerate is bound by residues lysine 338, arginine 367, serine 368, and lysine 389. Lysine 338 acts as the Proton acceptor in catalysis.

Belongs to the enolase family. Mg(2+) serves as cofactor.

Its subcellular location is the cytoplasm. It localises to the secreted. The protein localises to the cell surface. The enzyme catalyses (2R)-2-phosphoglycerate = phosphoenolpyruvate + H2O. It participates in carbohydrate degradation; glycolysis; pyruvate from D-glyceraldehyde 3-phosphate: step 4/5. Catalyzes the reversible conversion of 2-phosphoglycerate (2-PG) into phosphoenolpyruvate (PEP). It is essential for the degradation of carbohydrates via glycolysis. The sequence is that of Enolase from Syntrophobacter fumaroxidans (strain DSM 10017 / MPOB).